We begin with the raw amino-acid sequence, 484 residues long: Adenylosuccinate lyase (484 aa).

Ala-2 carries the N-acetylalanine modification. Residues Arg-20 to Tyr-21, Arg-85 to Asp-87, and Thr-111 to Ser-112 contribute to the substrate site. Lys-147 carries the N6-acetyllysine modification. His-159 serves as the catalytic Proton donor/acceptor. Residue Gln-241 coordinates substrate. Ser-289 functions as the Proton donor/acceptor in the catalytic mechanism. Lys-295 bears the N6-acetyllysine mark. 4 residues coordinate substrate: Arg-303, Arg-329, Ser-334, and Arg-338. Lys-415 participates in a covalent cross-link: Glycyl lysine isopeptide (Lys-Gly) (interchain with G-Cter in SUMO1).

This sequence belongs to the lyase 1 family. Adenylosuccinate lyase subfamily. Homotetramer. Residues from neighboring subunits contribute catalytic and substrate-binding residues to each active site.

The enzyme catalyses N(6)-(1,2-dicarboxyethyl)-AMP = fumarate + AMP. It catalyses the reaction (2S)-2-[5-amino-1-(5-phospho-beta-D-ribosyl)imidazole-4-carboxamido]succinate = 5-amino-1-(5-phospho-beta-D-ribosyl)imidazole-4-carboxamide + fumarate. It functions in the pathway purine metabolism; AMP biosynthesis via de novo pathway; AMP from IMP: step 2/2. The protein operates within purine metabolism; IMP biosynthesis via de novo pathway; 5-amino-1-(5-phospho-D-ribosyl)imidazole-4-carboxamide from 5-amino-1-(5-phospho-D-ribosyl)imidazole-4-carboxylate: step 2/2. Its function is as follows. Catalyzes two non-sequential steps in de novo AMP synthesis: converts (S)-2-(5-amino-1-(5-phospho-D-ribosyl)imidazole-4-carboxamido)succinate (SAICAR) to fumarate plus 5-amino-1-(5-phospho-D-ribosyl)imidazole-4-carboxamide, and thereby also contributes to de novo IMP synthesis, and converts succinyladenosine monophosphate (SAMP) to AMP and fumarate. The polypeptide is Adenylosuccinate lyase (ADSL) (Macaca fascicularis (Crab-eating macaque)).